The following is a 283-amino-acid chain: Arsenite methyltransferase (283 aa).

The protein belongs to the methyltransferase superfamily. Arsenite methyltransferase family.

It carries out the reaction arsenic triglutathione + [thioredoxin]-dithiol + S-adenosyl-L-methionine + 2 H2O = methylarsonous acid + [thioredoxin]-disulfide + 3 glutathione + S-adenosyl-L-homocysteine + H(+). It catalyses the reaction arsenic triglutathione + 2 [thioredoxin]-dithiol + 2 S-adenosyl-L-methionine + H2O = dimethylarsinous acid + 2 [thioredoxin]-disulfide + 3 glutathione + 2 S-adenosyl-L-homocysteine + 2 H(+). The enzyme catalyses arsenic triglutathione + 3 [thioredoxin]-dithiol + 3 S-adenosyl-L-methionine = trimethylarsine + 3 [thioredoxin]-disulfide + 3 glutathione + 3 S-adenosyl-L-homocysteine + 3 H(+). In terms of biological role, catalyzes the transfer of a methyl group from AdoMet to arsenite, producing methylated arsenicals. Involved in the conversion of As(III) to a number of di- and trimethylated species, with trimethylarsine as the end product. Reduces the arsenic toxicity in the cell and may contribute to the global arsenic cycling. The sequence is that of Arsenite methyltransferase from Rhodopseudomonas palustris (strain ATCC BAA-98 / CGA009).